A 303-amino-acid chain; its full sequence is Recombination-associated protein RdgC (303 aa).

The protein belongs to the RdgC family.

It is found in the cytoplasm. It localises to the nucleoid. In terms of biological role, may be involved in recombination. The sequence is that of Recombination-associated protein RdgC from Yersinia enterocolitica serotype O:8 / biotype 1B (strain NCTC 13174 / 8081).